Here is a 371-residue protein sequence, read N- to C-terminus: 4-hydroxyphenylpyruvate dioxygenase-like protein (371 aa).

VOC domains follow at residues 7–135 (RLCH…LLQR) and 160–328 (HVDH…VFTK). Residues His-163, His-258, and Glu-339 each coordinate Fe cation.

The protein belongs to the 4HPPD family. Fe cation serves as cofactor.

It localises to the mitochondrion. It catalyses the reaction 3-(4-hydroxyphenyl)pyruvate + O2 = (S)-4-hydroxymandelate + CO2. In terms of biological role, iron-dependent dioxygenase that catalyzes the conversion of 4-hydroxyphenylpyruvate (4-HPPA) to 4-hydroxymandelate (4-HMA) in the mitochondria, one of the steps in the biosynthesis of coenzyme Q10 from tyrosine. The protein is 4-hydroxyphenylpyruvate dioxygenase-like protein of Rattus norvegicus (Rat).